The chain runs to 86 residues: Large ribosomal subunit protein uL23 (86 aa).

Belongs to the universal ribosomal protein uL23 family. In terms of assembly, part of the 50S ribosomal subunit. Contacts protein L29.

Functionally, binds to 23S rRNA. One of the proteins that surrounds the polypeptide exit tunnel on the outside of the ribosome. This chain is Large ribosomal subunit protein uL23, found in Caldivirga maquilingensis (strain ATCC 700844 / DSM 13496 / JCM 10307 / IC-167).